Here is a 144-residue protein sequence, read N- to C-terminus: UPF0735 ACT domain-containing protein LSEI_1046 (144 aa).

The region spanning V68–V143 is the ACT domain.

This sequence belongs to the UPF0735 family.

The protein is UPF0735 ACT domain-containing protein LSEI_1046 of Lacticaseibacillus paracasei (strain ATCC 334 / BCRC 17002 / CCUG 31169 / CIP 107868 / KCTC 3260 / NRRL B-441) (Lactobacillus paracasei).